Consider the following 250-residue polypeptide: uncharacterized protein (250 aa).

The next 7 helical transmembrane spans lie at 36-56 (VALG…VPAV), 73-93 (PLYM…GFAM), 101-121 (AGAL…SVML), 128-148 (VAAT…FGYT), 156-176 (FGSF…VSIF), 180-200 (PALL…LIAY), and 225-245 (FGAL…LSFF).

The protein belongs to the BI1 family.

It is found in the cell membrane. This is an uncharacterized protein from Caulobacter vibrioides (strain ATCC 19089 / CIP 103742 / CB 15) (Caulobacter crescentus).